The chain runs to 223 residues: Deoxyribose-phosphate aldolase (223 aa).

The Proton donor/acceptor role is filled by Asp91. Residue Lys153 is the Schiff-base intermediate with acetaldehyde of the active site. The Proton donor/acceptor role is filled by Lys182.

This sequence belongs to the DeoC/FbaB aldolase family. DeoC type 1 subfamily.

Its subcellular location is the cytoplasm. The enzyme catalyses 2-deoxy-D-ribose 5-phosphate = D-glyceraldehyde 3-phosphate + acetaldehyde. The protein operates within carbohydrate degradation; 2-deoxy-D-ribose 1-phosphate degradation; D-glyceraldehyde 3-phosphate and acetaldehyde from 2-deoxy-alpha-D-ribose 1-phosphate: step 2/2. Catalyzes a reversible aldol reaction between acetaldehyde and D-glyceraldehyde 3-phosphate to generate 2-deoxy-D-ribose 5-phosphate. This is Deoxyribose-phosphate aldolase from Streptococcus pyogenes serotype M12 (strain MGAS2096).